The chain runs to 385 residues: Probable tRNA sulfurtransferase (385 aa).

Positions 57–161 constitute a THUMP domain; the sequence is NESIKRLSNV…NKNAYVWSNK (105 aa). Residues 181 to 182, 206 to 207, Arg263, Gly285, and Gln294 each bind ATP; these read ML and YY.

This sequence belongs to the ThiI family.

It is found in the cytoplasm. The catalysed reaction is [ThiI sulfur-carrier protein]-S-sulfanyl-L-cysteine + a uridine in tRNA + 2 reduced [2Fe-2S]-[ferredoxin] + ATP + H(+) = [ThiI sulfur-carrier protein]-L-cysteine + a 4-thiouridine in tRNA + 2 oxidized [2Fe-2S]-[ferredoxin] + AMP + diphosphate. It catalyses the reaction [ThiS sulfur-carrier protein]-C-terminal Gly-Gly-AMP + S-sulfanyl-L-cysteinyl-[cysteine desulfurase] + AH2 = [ThiS sulfur-carrier protein]-C-terminal-Gly-aminoethanethioate + L-cysteinyl-[cysteine desulfurase] + A + AMP + 2 H(+). It functions in the pathway cofactor biosynthesis; thiamine diphosphate biosynthesis. Catalyzes the ATP-dependent transfer of a sulfur to tRNA to produce 4-thiouridine in position 8 of tRNAs, which functions as a near-UV photosensor. Also catalyzes the transfer of sulfur to the sulfur carrier protein ThiS, forming ThiS-thiocarboxylate. This is a step in the synthesis of thiazole, in the thiamine biosynthesis pathway. The sulfur is donated as persulfide by IscS. This is Probable tRNA sulfurtransferase from Clostridium botulinum (strain Alaska E43 / Type E3).